Reading from the N-terminus, the 382-residue chain is Glutaminyl-peptide cyclotransferase-like protein (382 aa).

Residues 35–55 (LLPLLLALAVGSAFYTIWSGW) traverse the membrane as a helical segment. C167 and C191 are disulfide-bonded. Residue D186 participates in Zn(2+) binding. E225 (proton acceptor) is an active-site residue. E226 lines the Zn(2+) pocket. D269 acts as the Proton acceptor in catalysis. Residue H351 coordinates Zn(2+).

This sequence belongs to the glutaminyl-peptide cyclotransferase family.

It localises to the golgi apparatus membrane. It catalyses the reaction N-terminal L-glutaminyl-[peptide] = N-terminal 5-oxo-L-prolyl-[peptide] + NH4(+). In terms of biological role, responsible for the biosynthesis of pyroglutamyl peptides. This chain is Glutaminyl-peptide cyclotransferase-like protein (QPCTL), found in Homo sapiens (Human).